An 807-amino-acid polypeptide reads, in one-letter code: Leucine--tRNA ligase (807 aa).

The 'HIGH' region motif lies at 40–51; the sequence is PYPSGSGLHVGH. Residues 576–580 carry the 'KMSKS' region motif; sequence KMSKS. Lys579 contacts ATP.

This sequence belongs to the class-I aminoacyl-tRNA synthetase family.

The protein resides in the cytoplasm. The enzyme catalyses tRNA(Leu) + L-leucine + ATP = L-leucyl-tRNA(Leu) + AMP + diphosphate. The sequence is that of Leucine--tRNA ligase from Chlorobaculum tepidum (strain ATCC 49652 / DSM 12025 / NBRC 103806 / TLS) (Chlorobium tepidum).